The following is a 332-amino-acid chain: Phosphate acyltransferase (332 aa).

Belongs to the PlsX family. Homodimer. Probably interacts with PlsY.

It is found in the cytoplasm. It carries out the reaction a fatty acyl-[ACP] + phosphate = an acyl phosphate + holo-[ACP]. It participates in lipid metabolism; phospholipid metabolism. Its function is as follows. Catalyzes the reversible formation of acyl-phosphate (acyl-PO(4)) from acyl-[acyl-carrier-protein] (acyl-ACP). This enzyme utilizes acyl-ACP as fatty acyl donor, but not acyl-CoA. This Fusobacterium nucleatum subsp. nucleatum (strain ATCC 25586 / DSM 15643 / BCRC 10681 / CIP 101130 / JCM 8532 / KCTC 2640 / LMG 13131 / VPI 4355) protein is Phosphate acyltransferase.